The sequence spans 818 residues: Glycerol-3-phosphate acyltransferase (818 aa).

The short motif at 308–313 (CHRSHM) is the HXXXXD motif element.

It belongs to the GPAT/DAPAT family.

The protein localises to the cell inner membrane. The enzyme catalyses sn-glycerol 3-phosphate + an acyl-CoA = a 1-acyl-sn-glycero-3-phosphate + CoA. Its pathway is phospholipid metabolism; CDP-diacylglycerol biosynthesis; CDP-diacylglycerol from sn-glycerol 3-phosphate: step 1/3. The polypeptide is Glycerol-3-phosphate acyltransferase (Alteromonas mediterranea (strain DSM 17117 / CIP 110805 / LMG 28347 / Deep ecotype)).